A 768-amino-acid chain; its full sequence is Polyadenylate-binding protein, cytoplasmic and nuclear (768 aa).

The span at M1–V11 shows a compositional bias: polar residues. The disordered stretch occupies residues M1–P52. Residues A39–P52 show a composition bias toward low complexity. RRM domains lie at A55 to R133, G143 to A220, T236 to K314, and V340 to R470. Disordered regions lie at residues D374–P428, Q633–P662, and K739–S768. Positions G637–Q646 are enriched in gly residues. Residues P662 to K739 form the PABC domain. Over residues N753–S768 the composition is skewed to basic and acidic residues.

It belongs to the polyadenylate-binding protein type-1 family.

The protein resides in the cytoplasm. It localises to the nucleus. Binds the poly(A) tail of mRNA. Appears to be an important mediator of the multiple roles of the poly(A) tail in mRNA biogenesis, stability and translation. In the nucleus, involved in both mRNA cleavage and polyadenylation. Is also required for efficient mRNA export to the cytoplasm. Acts in concert with a poly(A)-specific nuclease (PAN) to affect poly(A) tail shortening, which may occur concomitantly with either nucleocytoplasmic mRNA transport or translational initiation. In the cytoplasm, stimulates translation initiation and regulates mRNA decay through translation termination-coupled poly(A) shortening, probably mediated by PAN. The polypeptide is Polyadenylate-binding protein, cytoplasmic and nuclear (PAB1) (Coccidioides immitis (strain RS) (Valley fever fungus)).